We begin with the raw amino-acid sequence, 166 residues long: Nicotine metabolites export pump subunit NepB (166 aa).

4 helical membrane passes run 51–71, 77–97, 108–128, and 133–153; these read LHAWLYLGSAITTEVTGTVIL, FQLPAQTTAAMALYAFSFFLL, VAYATWSGLGTVAVAFAGAII, and VTLGRITAITAVIGGIVILNL.

The protein belongs to the drug/metabolite transporter (DMT) superfamily. Small multidrug resistance (SMR) (TC 2.A.7.1) family. NepA/NepB subfamily. The efflux pump is composed of NepA and NepB.

The protein resides in the cell membrane. Its function is as follows. Component of an efflux pump responsible for the transport of nicotine breakdown products, in particular methylamine, out of the cell. This pump apparently serves as a metabolic valve for nicotine catabolites and may protect the bacteria from the potentially toxic side effects of these compounds. The sequence is that of Nicotine metabolites export pump subunit NepB (nepB) from Paenarthrobacter nicotinovorans (Arthrobacter nicotinovorans).